The following is an 800-amino-acid chain: Phenylalanine--tRNA ligase beta subunit (800 aa).

The region spanning 38–147 (GAELKGVVAA…PGTVPGTPIG (110 aa)) is the tRNA-binding domain. The B5 domain occupies 401–477 (VASPEVRMRW…RTLGYDAIPE (77 aa)). Asp-455, Asp-461, Glu-464, and Glu-465 together coordinate Mg(2+). The FDX-ACB domain maps to 708–799 (PRLPAVLRDV…LRERVGAELR (92 aa)).

The protein belongs to the phenylalanyl-tRNA synthetase beta subunit family. Type 1 subfamily. In terms of assembly, tetramer of two alpha and two beta subunits. Requires Mg(2+) as cofactor.

The protein localises to the cytoplasm. It carries out the reaction tRNA(Phe) + L-phenylalanine + ATP = L-phenylalanyl-tRNA(Phe) + AMP + diphosphate + H(+). This chain is Phenylalanine--tRNA ligase beta subunit, found in Anaeromyxobacter dehalogenans (strain 2CP-C).